The primary structure comprises 280 residues: Dermonecrotic toxin LgSicTox-alphaIA1 (280 aa).

The active site involves H12. Residues E32 and D34 each contribute to the Mg(2+) site. H48 functions as the Nucleophile in the catalytic mechanism. C52 and C58 are oxidised to a cystine. D92 serves as a coordination point for Mg(2+).

It belongs to the arthropod phospholipase D family. Class I subfamily. The cofactor is Mg(2+). As to expression, expressed by the venom gland.

The protein localises to the secreted. The enzyme catalyses an N-(acyl)-sphingosylphosphocholine = an N-(acyl)-sphingosyl-1,3-cyclic phosphate + choline. It catalyses the reaction an N-(acyl)-sphingosylphosphoethanolamine = an N-(acyl)-sphingosyl-1,3-cyclic phosphate + ethanolamine. The catalysed reaction is a 1-acyl-sn-glycero-3-phosphocholine = a 1-acyl-sn-glycero-2,3-cyclic phosphate + choline. It carries out the reaction a 1-acyl-sn-glycero-3-phosphoethanolamine = a 1-acyl-sn-glycero-2,3-cyclic phosphate + ethanolamine. Its function is as follows. Dermonecrotic toxins cleave the phosphodiester linkage between the phosphate and headgroup of certain phospholipids (sphingolipid and lysolipid substrates), forming an alcohol (often choline) and a cyclic phosphate. This toxin acts on sphingomyelin (SM). It may also act on ceramide phosphoethanolamine (CPE), lysophosphatidylcholine (LPC) and lysophosphatidylethanolamine (LPE), but not on lysophosphatidylserine (LPS), and lysophosphatidylglycerol (LPG). It acts by transphosphatidylation, releasing exclusively cyclic phosphate products as second products. Induces dermonecrosis, hemolysis, increased vascular permeability, edema, inflammatory response, and platelet aggregation. The protein is Dermonecrotic toxin LgSicTox-alphaIA1 of Loxosceles gaucho (Spider).